A 157-amino-acid polypeptide reads, in one-letter code: Protein Smg homolog (157 aa).

It belongs to the Smg family.

In Stenotrophomonas maltophilia (strain R551-3), this protein is Protein Smg homolog.